The following is a 339-amino-acid chain: RNA polymerase principal sigma factor HrdC (339 aa).

A compositionally biased stretch (low complexity) spans 1–10 (MAPTARTPTA). Disordered regions lie at residues 1 to 37 (MAPTARTPTARTRDDRRATTRTARLRTRIPEPDEEPD) and 71 to 101 (REELETADTGEPAPTPRRRRTLEETVHDGQE). Residues 91–101 (TLEETVHDGQE) show a composition bias toward basic and acidic residues. The Polymerase core binding motif lies at 130-143 (DVIQEGNLGLIRAV). Residues 300-319 (LQQVAQHVGLTRERVRQLEK) constitute a DNA-binding region (H-T-H motif).

The protein belongs to the sigma-70 factor family. In terms of assembly, interacts transiently with the RNA polymerase catalytic core.

Sigma factors are initiation factors that promote the attachment of RNA polymerase to specific initiation sites and are then released. The sequence is that of RNA polymerase principal sigma factor HrdC (hrdC) from Streptomyces coelicolor (strain ATCC BAA-471 / A3(2) / M145).